A 947-amino-acid chain; its full sequence is DNA mismatch repair protein MutS (947 aa).

ATP is bound at residue Gly-620 to Ser-627.

This sequence belongs to the DNA mismatch repair MutS family.

In terms of biological role, this protein is involved in the repair of mismatches in DNA. It is possible that it carries out the mismatch recognition step. This protein has a weak ATPase activity. The sequence is that of DNA mismatch repair protein MutS from Clostridioides difficile (strain 630) (Peptoclostridium difficile).